A 245-amino-acid polypeptide reads, in one-letter code: Thiopurine S-methyltransferase (245 aa).

Serine 14 is modified (phosphoserine). 29-40 (WQGKWVTGKTIF) is a binding site for S-adenosyl-L-methionine. Phenylalanine 40 contributes to the substrate binding site. Position 58 is an N6-acetyllysine (lysine 58). The S-adenosyl-L-methionine site is built by leucine 69, glutamate 90, and arginine 152.

This sequence belongs to the class I-like SAM-binding methyltransferase superfamily. TPMT family. In terms of assembly, monomer.

It localises to the cytoplasm. The enzyme catalyses S-adenosyl-L-methionine + a thiopurine = S-adenosyl-L-homocysteine + a thiopurine S-methylether.. In Equus caballus (Horse), this protein is Thiopurine S-methyltransferase (TPMT).